The following is a 195-amino-acid chain: MCDIKLIVGLANPGAEYAQTRHNAGAWYVEELARIANVSLAPDPKYFGLTARAILCGKDVRLLIPSTFMNLSGKSVAALANFFRIEPEQILVAHDELDMEPGVARFKLGGGHGGHNGLKDIIAKMGNNKNFYRLRIGIGHPGDKNKVSGYVLGKAPATEQEKMNAAIDEAVRSTEILFKQDMTKAMHRLHSFKAE.

Y17 contributes to the tRNA binding site. H22 (proton acceptor) is an active-site residue. F68, N70, and N116 together coordinate tRNA.

The protein belongs to the PTH family. In terms of assembly, monomer.

Its subcellular location is the cytoplasm. The enzyme catalyses an N-acyl-L-alpha-aminoacyl-tRNA + H2O = an N-acyl-L-amino acid + a tRNA + H(+). In terms of biological role, hydrolyzes ribosome-free peptidyl-tRNAs (with 1 or more amino acids incorporated), which drop off the ribosome during protein synthesis, or as a result of ribosome stalling. Functionally, catalyzes the release of premature peptidyl moieties from peptidyl-tRNA molecules trapped in stalled 50S ribosomal subunits, and thus maintains levels of free tRNAs and 50S ribosomes. The polypeptide is Peptidyl-tRNA hydrolase (Shewanella amazonensis (strain ATCC BAA-1098 / SB2B)).